A 524-amino-acid chain; its full sequence is Glutamyl-tRNA(Gln) amidotransferase subunit A, mitochondrial (524 aa).

Catalysis depends on charge relay system residues K76 and S171. The Acyl-ester intermediate role is filled by S195.

This sequence belongs to the amidase family. GatA subfamily. As to quaternary structure, subunit of the heterotrimeric GatCAB amidotransferase (AdT) complex, composed of A (qrsl1), B (gatb) and C (gatc) subunits.

The protein localises to the mitochondrion. The enzyme catalyses L-glutamyl-tRNA(Gln) + L-glutamine + ATP + H2O = L-glutaminyl-tRNA(Gln) + L-glutamate + ADP + phosphate + H(+). In terms of biological role, allows the formation of correctly charged Gln-tRNA(Gln) through the transamidation of misacylated Glu-tRNA(Gln) in the mitochondria. The reaction takes place in the presence of glutamine and ATP through an activated gamma-phospho-Glu-tRNA(Gln). The sequence is that of Glutamyl-tRNA(Gln) amidotransferase subunit A, mitochondrial (qrsl1) from Xenopus laevis (African clawed frog).